The chain runs to 905 residues: MQGNERIQDKNEKEKAYAPYLDGASVSTDNGPILSVFALQEIMQKIRQNQSDMAAHAPDVDGAIPEVMTIISGIKGLLEEKDYKVINAPPNSFRTIPMQSMEYVLQVNTFYERMSEIGGPVDETDPIGFYALILEKLKFLKSEGAFILQGIATKDYRGAEIADPEIIGVSFQNALSHLAAIDRQIIQDTLNGMIIENGLVADRNVDVFRAAMSDPIYRIRNVLQGYIEGIQYGELRESVNWLMRLGLRKRIEFANDFLTDFRRADTIWIISQRLPINANVIWNVPRCHIANLNTNVALCLPTGEYLMPNPRINSITITQRITQTNPFSIISGLTPTAVQMNDVRKIYLALMFPNQIILDIKPDSSHAVDPVLRMVAGVLGHVMFTYGPIMTNITPTMAELLDAALSDYLLYMYNNRIPINYGPTGQPLDFRIGARNQYDCNAFRADPQTGRGYNGWGVVDVQRVQPSPYDHVQRVIRYCDIDSREIIDPRTYGMNMTYPIFREMLRMLVAAGKDQEAAYLRQMLPFHMIRFARINQIINEDLLSAFSLPDQNFDVVLHNLIQGNFGETDPVILEVSWASIWFAFVRRFEPIARSDLLEAAPLIEARYAAELSTMQMDVQQLRMMRARVPDTVINATPSQCWKAVLKNAPEPIKNLMNLSHSFSFVNVRDIVRWSQQRDIQESLAYVLNREAWAIANDFEDLMLVDHVYIQRTMLPEPRLDDINEFRRQGFFHTNMIDGAPPIGDVTHYTYAIANLQANMGQFRAAIRRTLDDNGWIQFGGMLRNIKIKFFDSRPPDEILTAMPYVYTEEERDGVRMVAFKYATTATAYFLLYNVEYSNTPDTLITVNPTFTMTKIHMRKKIVRRVRAPDVLSQVNKRLVAYKGKMRLMDVTKCLKTGVQLARPTI.

It belongs to the orbivirus VP3 family.

Its subcellular location is the virion. The VP3 protein is one of the five proteins (with VP1, VP4, VP6 and VP7) which form the inner capsid of the virus. The chain is Core protein VP3 (Segment-3) from African horse sickness virus 6 (AHSV-6).